Here is a 130-residue protein sequence, read N- to C-terminus: Small ribosomal subunit protein uS9 (130 aa).

The protein belongs to the universal ribosomal protein uS9 family.

The protein is Small ribosomal subunit protein uS9 of Xanthomonas campestris pv. campestris (strain 8004).